Reading from the N-terminus, the 391-residue chain is Multidrug resistance protein MdtL (391 aa).

Over 1–3 the chain is Cytoplasmic; sequence MSR. A helical transmembrane segment spans residues 4-24; sequence FLICSFALVLLYPAGIDMYLV. Residues 25–41 lie on the Periplasmic side of the membrane; sequence GLPRIAADLNASEAQLH. Residues 42-62 traverse the membrane as a helical segment; it reads IAFSVYLAGMAAAMLFAGKVA. Residues 63–68 lie on the Cytoplasmic side of the membrane; sequence DRSGRK. A helical transmembrane segment spans residues 69 to 89; the sequence is PVAIPGAALFIIASVFCSLAE. Residues 90–92 lie on the Periplasmic side of the membrane; that stretch reads TSA. The helical transmembrane segment at 93 to 113 threads the bilayer; it reads LFLAGRFLQGLGAGCCYVVAF. Residues 114-130 lie on the Cytoplasmic side of the membrane; it reads AILRDTLDDRRRAKVLS. A helical transmembrane segment spans residues 131–151; that stretch reads LLNGITCIIPVLAPVLGHLIM. At 152–157 the chain is on the periplasmic side; it reads LKFPWQ. A helical transmembrane segment spans residues 158-178; that stretch reads SLFWTMATMGIAVLMLSLFIL. The Cytoplasmic segment spans residues 179–202; the sequence is KETRPAAPAASDKPRENSESLLNR. A helical transmembrane segment spans residues 203–222; sequence FFLSRVVITTLSVSVILTFV. At 223–244 the chain is on the periplasmic side; sequence NTSPVLLMEIMGFERGEYATIM. A helical transmembrane segment spans residues 245 to 265; that stretch reads ALTAGVSMTVSFSTPFALGIF. The Cytoplasmic portion of the chain corresponds to 266-268; it reads KPR. A helical membrane pass occupies residues 269–289; that stretch reads TLMITSQVLFLAAGITLAVSP. Over 290–292 the chain is Periplasmic; that stretch reads SHA. The helical transmembrane segment at 293-313 threads the bilayer; that stretch reads VSLFGITLICAGFSVGFGVAM. Residues 314–330 are Cytoplasmic-facing; sequence SQALGPFSLRAGVASST. Residues 331–351 traverse the membrane as a helical segment; the sequence is LGIAQVCGSSLWIWLAAVVGI. The Periplasmic segment spans residues 352–355; it reads GAWN. A helical membrane pass occupies residues 356-376; that stretch reads MLIGILIACSIVSLLLIMFVA. At 377–391 the chain is on the cytoplasmic side; sequence PGRPVAAHEEIHHHA.

This sequence belongs to the major facilitator superfamily. DHA1 family. MdtL (TC 2.A.1.2.22) subfamily.

Its subcellular location is the cell inner membrane. Confers resistance to chloramphenicol. In Escherichia coli O6:K15:H31 (strain 536 / UPEC), this protein is Multidrug resistance protein MdtL.